Reading from the N-terminus, the 229-residue chain is Pdp3-interacting factor 1 (229 aa).

The active-site Nucleophile is the aspartate 12. Mg(2+)-binding residues include aspartate 12, aspartate 14, and aspartate 176. Catalysis depends on aspartate 14, which acts as the Proton donor.

Belongs to the HAD-like hydrolase superfamily. Component of the mst2 complex composed of at least eaf6, mst2, nto1, pdp3, ptf1, ptf2 and tfg3. Requires Mg(2+) as cofactor.

The protein resides in the cytoplasm. The protein localises to the nucleus. The catalysed reaction is D-ribitol 5-phosphate + H2O = ribitol + phosphate. The enzyme catalyses D-sorbitol 6-phosphate + H2O = D-sorbitol + phosphate. It catalyses the reaction sn-glycerol 1-phosphate + H2O = glycerol + phosphate. It carries out the reaction D-erythrose 4-phosphate + H2O = D-erythrose + phosphate. In terms of biological role, component of the mst2 complex which is a highly specific H3 lysine 14 (H3K14) acetyltransferase that functions together with gcn5 to regulate global levels of H3K14 acetylation (H3K14ac), critical for DNA damage checkpoint activation. May also function as a sugar alcohol (polyol) phosphatase that prevents accumulation of toxic levels of polyol phosphates, which can impair glycolysis by inhibiting glucose-6-phosphate isomerase. In Schizosaccharomyces pombe (strain 972 / ATCC 24843) (Fission yeast), this protein is Pdp3-interacting factor 1.